The sequence spans 223 residues: Rho-related protein racE (223 aa).

GTP is bound at residue 18–25 (GDGAVGKT). The Effector region motif lies at 40–48 (YVPTVFENY). GTP contacts are provided by residues 65–69 (DTAGQ) and 123–126 (TKID). The interval 187–223 (GMDKKSQDGSSSASGVPSGDKPTKGKAGKKKSGCIIL) is disordered. Basic residues predominate over residues 210–223 (KGKAGKKKSGCIIL). Residue Cys-220 is modified to Cysteine methyl ester. A lipid anchor (S-geranylgeranyl cysteine) is attached at Cys-220. The propeptide at 221–223 (IIL) is removed in mature form.

The protein belongs to the small GTPase superfamily. Rho family. In terms of assembly, interacts with rgaA.

The protein resides in the cell membrane. Specifically required for cytokinesis. The protein is Rho-related protein racE (racE) of Dictyostelium discoideum (Social amoeba).